The following is a 273-amino-acid chain: Tryptophan synthase alpha chain (273 aa).

Active-site proton acceptor residues include E49 and D60.

It belongs to the TrpA family. As to quaternary structure, tetramer of two alpha and two beta chains.

It carries out the reaction (1S,2R)-1-C-(indol-3-yl)glycerol 3-phosphate + L-serine = D-glyceraldehyde 3-phosphate + L-tryptophan + H2O. It participates in amino-acid biosynthesis; L-tryptophan biosynthesis; L-tryptophan from chorismate: step 5/5. Functionally, the alpha subunit is responsible for the aldol cleavage of indoleglycerol phosphate to indole and glyceraldehyde 3-phosphate. The sequence is that of Tryptophan synthase alpha chain from Thiobacillus denitrificans (strain ATCC 25259 / T1).